Consider the following 118-residue polypeptide: Non-specific lipid-transfer protein 1 (118 aa).

A signal peptide spans 1 to 20 (MARLAVAIAVVAAVVVVLAA). Cystine bridges form between cysteine 29/cysteine 77, cysteine 39/cysteine 54, cysteine 55/cysteine 100, and cysteine 75/cysteine 114.

Belongs to the plant LTP family.

Its function is as follows. Plant non-specific lipid-transfer proteins transfer phospholipids as well as galactolipids across membranes. May play a role in wax or cutin deposition in the cell walls of expanding epidermal cells and certain secretory tissues. This chain is Non-specific lipid-transfer protein 1 (LTP1), found in Sorghum bicolor (Sorghum).